Here is a 101-residue protein sequence, read N- to C-terminus: Urease subunit beta (101 aa).

Belongs to the urease beta subunit family. As to quaternary structure, heterotrimer of UreA (gamma), UreB (beta) and UreC (alpha) subunits. Three heterotrimers associate to form the active enzyme.

It is found in the cytoplasm. The catalysed reaction is urea + 2 H2O + H(+) = hydrogencarbonate + 2 NH4(+). Its pathway is nitrogen metabolism; urea degradation; CO(2) and NH(3) from urea (urease route): step 1/1. The chain is Urease subunit beta from Rhizobium rhizogenes (strain K84 / ATCC BAA-868) (Agrobacterium radiobacter).